Here is a 144-residue protein sequence, read N- to C-terminus: Peptide methionine sulfoxide reductase MsrB (144 aa).

The region spanning 5–128 (KEELRQRIGE…NSAALQFIPV (124 aa)) is the MsrB domain. Residue C117 is the Nucleophile of the active site.

It belongs to the MsrB Met sulfoxide reductase family.

The catalysed reaction is L-methionyl-[protein] + [thioredoxin]-disulfide + H2O = L-methionyl-(R)-S-oxide-[protein] + [thioredoxin]-dithiol. In Ligilactobacillus salivarius (strain UCC118) (Lactobacillus salivarius), this protein is Peptide methionine sulfoxide reductase MsrB.